The chain runs to 68 residues: MLKSFCILSVFMVLFLAKFPDLCSGEEISPLKIVVRNSEYLNNPCNGVTCPSGYRCSIVDKQCIKKEK.

The N-terminal stretch at 1 to 25 (MLKSFCILSVFMVLFLAKFPDLCSG) is a signal peptide. The propeptide occupies 26–36 (EEISPLKIVVR). 2 cysteine pairs are disulfide-bonded: cysteine 45/cysteine 56 and cysteine 50/cysteine 63. The highly charged C-terminal region, binds to TRPV1 channel stretch occupies residues 55–67 (RCSIVDKQCIKKE).

It belongs to the scoloptoxin-04 family. As to expression, expressed by the venom gland.

The protein localises to the secreted. In terms of biological role, extremely potent agonist and potentiator of TRPV1 (EC(50)=470-521.5 nM (mouse)). It strongly promotes the heat activation process by downshifting the activation threshold temperature. It preferably binds to the activated channel and promotes its opening. Holding the channel closed by cooling prevents binding of this toxin, leaving it ineffective. The toxin binds to the charge-rich outer pore region of the channel where it directly interacts with the pore helix and turret, two adjacent structural elements known to be critical for activation gating of TRPV1. In comparison with Sm1b, induces a TRPV1 desensitization with slower kinetics (20 seconds). In vivo, induces pain in mice after intraplantar injection. Its function is as follows. Potent agonist and probable potentiator of TRPV1 (EC(50)=38.35 uM (mouse)). Also binds to the outer pore region of TRPV1. In comparison with Sm1a, induces a TRPV1 desensitization with faster kinetics (2 seconds) and leads to a more complete TRPV1 desensitization. Desensitization is achieved by reducing both the open probability and the single-channel conductance upon prolonged exposure. This is Tau-scoloptoxin(04)-Ssm1b from Scolopendra mutilans (Chinese red-headed centipede).